The sequence spans 202 residues: Peptide deformylase (202 aa).

Residues C121 and H163 each contribute to the Fe cation site. E164 is an active-site residue. H167 lines the Fe cation pocket.

Belongs to the polypeptide deformylase family. Fe(2+) serves as cofactor.

The catalysed reaction is N-terminal N-formyl-L-methionyl-[peptide] + H2O = N-terminal L-methionyl-[peptide] + formate. In terms of biological role, removes the formyl group from the N-terminal Met of newly synthesized proteins. Requires at least a dipeptide for an efficient rate of reaction. N-terminal L-methionine is a prerequisite for activity but the enzyme has broad specificity at other positions. The sequence is that of Peptide deformylase from Synechococcus sp. (strain CC9311).